Consider the following 448-residue polypeptide: Phosphoglucosamine mutase (448 aa).

Serine 100 acts as the Phosphoserine intermediate in catalysis. Mg(2+) is bound by residues serine 100, aspartate 240, aspartate 242, and aspartate 244. A Phosphoserine modification is found at serine 100.

This sequence belongs to the phosphohexose mutase family. Requires Mg(2+) as cofactor. Activated by phosphorylation.

It catalyses the reaction alpha-D-glucosamine 1-phosphate = D-glucosamine 6-phosphate. In terms of biological role, catalyzes the conversion of glucosamine-6-phosphate to glucosamine-1-phosphate. This Bacillus mycoides (strain KBAB4) (Bacillus weihenstephanensis) protein is Phosphoglucosamine mutase.